Reading from the N-terminus, the 201-residue chain is Recombination protein RecR (201 aa).

A C4-type zinc finger spans residues C60–C75. A Toprim domain is found at S83–P178.

Belongs to the RecR family.

May play a role in DNA repair. It seems to be involved in an RecBC-independent recombinational process of DNA repair. It may act with RecF and RecO. This chain is Recombination protein RecR, found in Methylocella silvestris (strain DSM 15510 / CIP 108128 / LMG 27833 / NCIMB 13906 / BL2).